A 715-amino-acid chain; its full sequence is Patatin-like phospholipase domain-containing protein ATEG_02594 (715 aa).

A helical membrane pass occupies residues W84–T104. In terms of domain architecture, PNPLA spans L274–N465. Positions G305–G309 match the GXSXG motif. S307 acts as the Nucleophile in catalysis. D452 functions as the Proton acceptor in the catalytic mechanism. A disordered region spans residues T613 to Q715. The span at R652–D661 shows a compositional bias: basic and acidic residues. Polar residues predominate over residues A665 to A678.

Belongs to the PLPL family.

It localises to the membrane. Its function is as follows. Probable lipid hydrolase. This Aspergillus terreus (strain NIH 2624 / FGSC A1156) protein is Patatin-like phospholipase domain-containing protein ATEG_02594.